We begin with the raw amino-acid sequence, 2623 residues long: Immunoglobulin superfamily member 10 (2623 aa).

An N-terminal signal peptide occupies residues 1–28 (MKVKGRGITCLLVSFAVICLVATPGGKA). The 28-residue stretch at 29–56 (CPRRCACYMPTEVHCTFRYLTSIPDSIP) folds into the LRRNT domain. LRR repeat units follow at residues 58 to 79 (NVER…DFSG), 82 to 103 (KLEL…TFSD), 106 to 127 (ALQV…TFYG), 130 to 151 (SLTR…VFYG), 154 to 175 (FLRL…TFVS), and 186 to 207 (FIKF…MVSY). Residues 219-281 (NPWTCDCHLK…VSAAAFQCAK (63 aa)) enclose the LRRCT domain. Residues Asn-319 and Asn-439 are each glycosylated (N-linked (GlcNAc...) asparagine). Ig-like C2-type domains lie at 461-567 (PRAE…YRIT) and 571-661 (PLVE…FQVS). Disulfide bonds link Cys-497–Cys-551 and Cys-595–Cys-645. Residue Asn-627 is glycosylated (N-linked (GlcNAc...) asparagine). Disordered regions lie at residues 668-692 (RPLE…HLKE) and 767-788 (AMPD…QLPN). Asn-774 and Asn-999 each carry an N-linked (GlcNAc...) asparagine glycan. 2 disordered regions span residues 1334 to 1376 (TQTE…AMTP) and 1434 to 1453 (STIA…TTTR). Residues 1335 to 1356 (QTERSRAQTIQREQEPQKKNRT) are compositionally biased toward basic and acidic residues. The segment covering 1357–1373 (DPNISPDQSSGFTTPTA) has biased composition (polar residues). Ig-like C2-type domains are found at residues 1648 to 1739 (PRIV…VTLS), 1745 to 1836 (PRIL…VKIQ), 1841 to 1933 (PPVI…VMLT), 1941 to 2034 (PRIE…VSLR), 2037 to 2135 (PAKI…VHLT), 2141 to 2229 (PRIR…YKLD), 2234 to 2331 (PPLI…LEVL), 2337 to 2427 (PTFR…VILE), 2432 to 2518 (PVIL…TLIT), and 2528 to 2623 (PRIT…IQVI). 3 disulfide bridges follow: Cys-1670/Cys-1723, Cys-1767/Cys-1820, and Cys-1864/Cys-1917. 2 N-linked (GlcNAc...) asparagine glycosylation sites follow: Asn-1899 and Asn-1962. Intrachain disulfides connect Cys-1963-Cys-2016, Cys-2060-Cys-2119, Cys-2163-Cys-2213, Cys-2261-Cys-2313, Cys-2359-Cys-2411, Cys-2454-Cys-2506, and Cys-2550-Cys-2605. N-linked (GlcNAc...) asparagine glycosylation occurs at Asn-2101. Position 2603 is a phosphotyrosine (Tyr-2603).

It is found in the secreted. In terms of biological role, involved in the control of early migration of neurons expressing gonadotropin-releasing hormone (GNRH neurons). May be involved in the maintenance of osteochondroprogenitor cells pool. The sequence is that of Immunoglobulin superfamily member 10 (IGSF10) from Homo sapiens (Human).